The following is a 97-amino-acid chain: Plasmid stability protein StbC (97 aa).

Involved in plasmid stability. This Pseudomonas syringae pv. tomato (strain ATCC BAA-871 / DC3000) protein is Plasmid stability protein StbC (stbC).